Here is a 257-residue protein sequence, read N- to C-terminus: Imidazole glycerol phosphate synthase subunit HisF (257 aa).

Catalysis depends on residues Asp11 and Asp130.

This sequence belongs to the HisA/HisF family. Heterodimer of HisH and HisF.

It localises to the cytoplasm. The catalysed reaction is 5-[(5-phospho-1-deoxy-D-ribulos-1-ylimino)methylamino]-1-(5-phospho-beta-D-ribosyl)imidazole-4-carboxamide + L-glutamine = D-erythro-1-(imidazol-4-yl)glycerol 3-phosphate + 5-amino-1-(5-phospho-beta-D-ribosyl)imidazole-4-carboxamide + L-glutamate + H(+). It functions in the pathway amino-acid biosynthesis; L-histidine biosynthesis; L-histidine from 5-phospho-alpha-D-ribose 1-diphosphate: step 5/9. IGPS catalyzes the conversion of PRFAR and glutamine to IGP, AICAR and glutamate. The HisF subunit catalyzes the cyclization activity that produces IGP and AICAR from PRFAR using the ammonia provided by the HisH subunit. The polypeptide is Imidazole glycerol phosphate synthase subunit HisF (Pseudoalteromonas atlantica (strain T6c / ATCC BAA-1087)).